A 205-amino-acid chain; its full sequence is Protein phosphatase inhibitor 2 family member C (205 aa).

Disordered regions lie at residues 1–51 (MSAS…DESS) and 70–114 (EPGT…DHSC). The interval 12 to 17 (KGILKN) is required for binding PPP1CC. Over residues 19-34 (SSSGSSVATSGQQSGG) the composition is skewed to low complexity. The interval 43-55 (KSQKWDESSILAT) is required for binding PPP1CC. Over residues 84–102 (DSVRDVEGEDSVRGVEGKE) the composition is skewed to basic and acidic residues. The interval 147–150 (HYNE) is required for binding PPP1CC catalytic center, displacing metal ions and inhibition of PPP1CC catalytic activity. A disordered region spans residues 165 to 205 (LQSEDDENEERPQATNEEKTAAEESEEAPLSGGLQTQSCDP). The span at 174 to 186 (ERPQATNEEKTAA) shows a compositional bias: basic and acidic residues.

Belongs to the protein phosphatase inhibitor 2 family.

Functionally, functions as a protein phosphatase inhibitor. It inhibits activity of the catalytic subunit of PP1 and weakly inhibits the activity of myosin-associated phosphates. The polypeptide is Protein phosphatase inhibitor 2 family member C (PPP1R2C) (Macaca fascicularis (Crab-eating macaque)).